The primary structure comprises 90 residues: Probable Fe(2+)-trafficking protein (90 aa).

It belongs to the Fe(2+)-trafficking protein family.

In terms of biological role, could be a mediator in iron transactions between iron acquisition and iron-requiring processes, such as synthesis and/or repair of Fe-S clusters in biosynthetic enzymes. The chain is Probable Fe(2+)-trafficking protein from Dechloromonas aromatica (strain RCB).